The chain runs to 1259 residues: Cingulin (1259 aa).

Residues 9–324 are head; that stretch reads MADQPIPVGQ…EKFPSLQAQP (316 aa). The short motif at 41–55 is the ZIM element; the sequence is QDSYGVAVRVQGIDG. Basic and acidic residues predominate over residues 69–79; it reads SSYDYDRHYSE. Disordered stretches follow at residues 69–151, 169–232, 317–338, 941–969, and 1192–1259; these read SSYD…IDTK, VRGR…RQSL, FPSLQAQPGEDTRSLGSQKKEL, KSRREIGEAQKQAKEKTAEAERHQFNSSR, and REME…TSSC. Polar residues predominate over residues 80-100; it reads RSSTLDTAYSQSSRESAWSRG. Residues 117-127 are compositionally biased toward low complexity; the sequence is SATSQQSTSAS. A compositionally biased stretch (polar residues) spans 128–145; it reads NKTNKNGLSTSSFSNQSS. Residues 179 to 204 show a composition bias toward basic and acidic residues; the sequence is ALKDERKRSQSLDGRKNYQDTADSRE. Residues 220 to 229 are compositionally biased toward polar residues; that stretch reads VSSANRSFAR. Residues 325–1218 adopt a coiled-coil conformation; sequence GEDTRSLGSQ…KTMEKESKRK (894 aa). Over residues 326-338 the composition is skewed to basic and acidic residues; sequence EDTRSLGSQKKEL. The tail stretch occupies residues 1220-1259; sequence IRPAHNDDDDLSSDGEYGGSYDPSSITSLLTESNLQTSSC. Over residues 1241–1259 the composition is skewed to polar residues; that stretch reads DPSSITSLLTESNLQTSSC.

The protein belongs to the cingulin family. In terms of assembly, parallel homodimer. Interacts with TJP1/ZO1 and TJP2/ZO2.

The protein resides in the cell junction. It is found in the tight junction. Functionally, probably plays a role in the formation and regulation of the tight junction (TJ) paracellular permeability barrier, possibly by linking ZO proteins to the actomyosin cytoskeleton. This is Cingulin from Xenopus tropicalis (Western clawed frog).